Here is a 181-residue protein sequence, read N- to C-terminus: Trafficking protein particle complex subunit 3-like protein (181 aa).

Cysteine 68 carries S-palmitoyl cysteine lipidation.

It belongs to the TRAPP small subunits family. BET3 subfamily. Homodimer. Component of the multisubunit TRAPP (transport protein particle) complex, which includes at least TRAPPC2, TRAPPC2L, TRAPPC3, TRAPPC3L, TRAPPC4, TRAPPC5, TRAPPC8, TRAPPC9, TRAPPC10, TRAPPC11 and TRAPPC12.

Its subcellular location is the golgi apparatus. It localises to the cis-Golgi network. The protein localises to the endoplasmic reticulum. In terms of biological role, may play a role in vesicular transport from endoplasmic reticulum to Golgi. In Mus musculus (Mouse), this protein is Trafficking protein particle complex subunit 3-like protein (Trappc3l).